We begin with the raw amino-acid sequence, 160 residues long: Troponin C, skeletal muscle (160 aa).

Thr2 carries the N-acetylthreonine modification. 4 consecutive EF-hand domains span residues 15–50 (EMIA…LGQT), 51–86 (PTKE…QMKE), 91–126 (KSEE…SGEH), and 127–160 (VTDE…EGVQ). Ca(2+) is bound by residues Asp28, Asp30, Asp34, Glu39, Asp64, Asp66, Ser68, Thr70, Glu75, Asp104, Asn106, Asp108, Tyr110, Glu115, Asp140, Asn142, Asp144, Arg146, and Glu151.

It belongs to the troponin C family.

Troponin is the central regulatory protein of striated muscle contraction. Tn consists of three components: Tn-I which is the inhibitor of actomyosin ATPase, Tn-T which contains the binding site for tropomyosin and Tn-C. The binding of calcium to Tn-C abolishes the inhibitory action of Tn on actin filaments. This is Troponin C, skeletal muscle (TNNC2) from Oryctolagus cuniculus (Rabbit).